Reading from the N-terminus, the 361-residue chain is Plasmid recombination enzyme (361 aa).

DNA contacts are provided by Y44 and Y114. Residues 331 to 361 are disordered; the sequence is RAGLKEPSKKAPESSQELDRHKSDELGGPHL.

Belongs to the plasmid mobilization pre family.

Its function is as follows. The interaction of the RSA site and the pre protein may not only serve a function in plasmid maintenance, but also contribute to the distribution of small antibiotic resistance plasmids among Gram-positive bacteria. This is Plasmid recombination enzyme (preA) from Lactiplantibacillus plantarum (Lactobacillus plantarum).